The following is a 349-amino-acid chain: tRNA-specific 2-thiouridylase MnmA (349 aa).

Residues 6–13 (LLSGGVDS) and methionine 32 contribute to the ATP site. Cysteine 103 serves as the catalytic Nucleophile. An intrachain disulfide couples cysteine 103 to cysteine 195. Glycine 127 serves as a coordination point for ATP. The interval 145–147 (KDQ) is interaction with tRNA. The Cysteine persulfide intermediate role is filled by cysteine 195.

Belongs to the MnmA/TRMU family.

It is found in the cytoplasm. It carries out the reaction S-sulfanyl-L-cysteinyl-[protein] + uridine(34) in tRNA + AH2 + ATP = 2-thiouridine(34) in tRNA + L-cysteinyl-[protein] + A + AMP + diphosphate + H(+). Functionally, catalyzes the 2-thiolation of uridine at the wobble position (U34) of tRNA, leading to the formation of s(2)U34. The polypeptide is tRNA-specific 2-thiouridylase MnmA (Pseudothermotoga lettingae (strain ATCC BAA-301 / DSM 14385 / NBRC 107922 / TMO) (Thermotoga lettingae)).